We begin with the raw amino-acid sequence, 131 residues long: Small ribosomal subunit protein uS11 (131 aa).

The protein belongs to the universal ribosomal protein uS11 family. Part of the 30S ribosomal subunit. Interacts with proteins S7 and S18. Binds to IF-3.

In terms of biological role, located on the platform of the 30S subunit, it bridges several disparate RNA helices of the 16S rRNA. Forms part of the Shine-Dalgarno cleft in the 70S ribosome. The chain is Small ribosomal subunit protein uS11 from Deinococcus radiodurans (strain ATCC 13939 / DSM 20539 / JCM 16871 / CCUG 27074 / LMG 4051 / NBRC 15346 / NCIMB 9279 / VKM B-1422 / R1).